Consider the following 61-residue polypeptide: Probable tautomerase stu1128 (61 aa).

The active-site Proton acceptor; via imino nitrogen is proline 2.

This sequence belongs to the 4-oxalocrotonate tautomerase family.

The polypeptide is Probable tautomerase stu1128 (Streptococcus thermophilus (strain ATCC BAA-250 / LMG 18311)).